The following is an 83-amino-acid chain: uncharacterized protein (83 aa).

This is an uncharacterized protein from Archaeoglobus fulgidus (strain ATCC 49558 / DSM 4304 / JCM 9628 / NBRC 100126 / VC-16).